Reading from the N-terminus, the 121-residue chain is Protein 3.8 (121 aa).

The sequence is that of Protein 3.8 from Escherichia phage T7 (Bacteriophage T7).